A 302-amino-acid chain; its full sequence is Aspartate carbamoyltransferase catalytic subunit (302 aa).

Residues Arg53 and Thr54 each coordinate carbamoyl phosphate. Position 82 (Lys82) interacts with L-aspartate. Positions 103, 131, and 134 each coordinate carbamoyl phosphate. L-aspartate-binding residues include Arg164 and Arg223. Carbamoyl phosphate contacts are provided by Leu260 and Pro261.

It belongs to the aspartate/ornithine carbamoyltransferase superfamily. ATCase family. Heterooligomer of catalytic and regulatory chains.

The catalysed reaction is carbamoyl phosphate + L-aspartate = N-carbamoyl-L-aspartate + phosphate + H(+). The protein operates within pyrimidine metabolism; UMP biosynthesis via de novo pathway; (S)-dihydroorotate from bicarbonate: step 2/3. Functionally, catalyzes the condensation of carbamoyl phosphate and aspartate to form carbamoyl aspartate and inorganic phosphate, the committed step in the de novo pyrimidine nucleotide biosynthesis pathway. The polypeptide is Aspartate carbamoyltransferase catalytic subunit (Methanococcus maripaludis (strain C7 / ATCC BAA-1331)).